Here is a 450-residue protein sequence, read N- to C-terminus: Serine/threonine-protein kinase-transforming protein Rmil (450 aa).

Composition is skewed to basic and acidic residues over residues 1 to 14 (MEAV…DQGV) and 49 to 73 (QRER…RDSS). The tract at residues 1-80 (MEAVIKDLIR…DSSDDWEIPD (80 aa)) is disordered. Residues 83-343 (ITVGQRIGSG…PQILASIELL (261 aa)) enclose the Protein kinase domain. ATP-binding positions include 89–97 (IGSGSFGTV) and lysine 109. Residue aspartate 202 is the Proton acceptor of the active site.

Belongs to the protein kinase superfamily. TKL Ser/Thr protein kinase family. RAF subfamily.

The catalysed reaction is L-seryl-[protein] + ATP = O-phospho-L-seryl-[protein] + ADP + H(+). It carries out the reaction L-threonyl-[protein] + ATP = O-phospho-L-threonyl-[protein] + ADP + H(+). The protein is Serine/threonine-protein kinase-transforming protein Rmil (V-RMIL) of Avian rous-associated virus type 1.